A 710-amino-acid chain; its full sequence is Ephexin-1 (710 aa).

Composition is skewed to basic and acidic residues over residues 1-11 (METRESEDLEK) and 26-41 (EPAK…KEET). Residues 1-143 (METRESEDLE…PGNGATPEEW (143 aa)) form a disordered region. Positions 1–273 (METRESEDLE…LEILQPEEIK (273 aa)) are regulatory region; modulates activity toward RHOA, RAC1 and CDC42. Composition is skewed to polar residues over residues 89–102 (ADSQ…NEPL) and 127–136 (MSESSSTPGN). Position 179 is a phosphotyrosine (tyrosine 179). The tract at residues 194-236 (RRQQDAEIEDNTNGSPASEDTPEEEEEEEEEEEPASPPERKTL) is disordered. Positions 213–227 (DTPEEEEEEEEEEEP) are enriched in acidic residues. The region spanning 273–457 (KLQEAMFELV…EMVVKACNEG (185 aa)) is the DH domain. The region spanning 489-601 (WLLKQGELQQ…WMTSLAPNRR (113 aa)) is the PH domain. The SH3 domain occupies 612–673 (LDCPQVQCVH…PSSMTEEILN (62 aa)). Basic and acidic residues predominate over residues 687 to 699 (VHKMDDPQRSQNK). A disordered region spans residues 687–710 (VHKMDDPQRSQNKDRRKLGSRNRQ). The segment covering 700–710 (DRRKLGSRNRQ) has biased composition (basic residues).

Interacts with CDK5R1 and EPHA4; activated by EPHA4 through the CDK5 kinase. In terms of processing, src-dependent phosphorylation at Tyr-179 upon EPHA4 activation increases the guanine exchange factor activity toward RHOA. Phosphorylation by CDK5 upon EPHA4 activation by EFNA1 may regulate dendritic spine morphogenesis. Highly expressed in brain specifically in caudate nucleus and to a lower extent in amygdala and hippocampus. Also detected in lung.

It localises to the cytoplasm. It is found in the membrane. The protein resides in the cell projection. The protein localises to the growth cone. Functionally, acts as a guanine nucleotide exchange factor (GEF) which differentially activates the GTPases RHOA, RAC1 and CDC42. Plays a role in axon guidance regulating ephrin-induced growth cone collapse and dendritic spine morphogenesis. Upon activation by ephrin through EPHA4, the GEF activity switches toward RHOA resulting in its activation. Activated RHOA promotes cone retraction at the expense of RAC1- and CDC42-stimulated growth cone extension. The polypeptide is Ephexin-1 (NGEF) (Homo sapiens (Human)).